A 152-amino-acid chain; its full sequence is Large ribosomal subunit protein uL22 (152 aa).

A compositionally biased stretch (low complexity) spans 124-145 (APKKAAAKKAAPAKETTPAATE). The disordered stretch occupies residues 124–152 (APKKAAAKKAAPAKETTPAATESKTEGAE).

Belongs to the universal ribosomal protein uL22 family. Part of the 50S ribosomal subunit.

This protein binds specifically to 23S rRNA; its binding is stimulated by other ribosomal proteins, e.g. L4, L17, and L20. It is important during the early stages of 50S assembly. It makes multiple contacts with different domains of the 23S rRNA in the assembled 50S subunit and ribosome. In terms of biological role, the globular domain of the protein is located near the polypeptide exit tunnel on the outside of the subunit, while an extended beta-hairpin is found that lines the wall of the exit tunnel in the center of the 70S ribosome. In Salinispora tropica (strain ATCC BAA-916 / DSM 44818 / JCM 13857 / NBRC 105044 / CNB-440), this protein is Large ribosomal subunit protein uL22.